Here is a 264-residue protein sequence, read N- to C-terminus: Phosphonoacetaldehyde hydrolase (264 aa).

D9 acts as the Nucleophile in catalysis. Residues D9 and A11 each contribute to the Mg(2+) site. Catalysis depends on K50, which acts as the Schiff-base intermediate with substrate. D183 lines the Mg(2+) pocket.

The protein belongs to the HAD-like hydrolase superfamily. PhnX family. Homodimer. It depends on Mg(2+) as a cofactor.

It carries out the reaction phosphonoacetaldehyde + H2O = acetaldehyde + phosphate + H(+). In terms of biological role, involved in phosphonate degradation. The chain is Phosphonoacetaldehyde hydrolase from Bacillus cereus (strain ZK / E33L).